The chain runs to 433 residues: Adenylyltransferase and sulfurtransferase UBA4 (433 aa).

ATP-binding positions include Gly70, Asp91, 98–102 (SNLHR), Lys115, and 159–160 (DT). Residues Cys201 and Cys204 each contribute to the Zn(2+) site. The Glycyl thioester intermediate; for adenylyltransferase activity role is filled by Cys218. Zn(2+) is bound by residues Cys279 and Cys282. A Rhodanese domain is found at 332–431 (SGNNKVLLDV…YIDDVDQSIP (100 aa)). Cys390 acts as the Cysteine persulfide intermediate; for sulfurtransferase activity in catalysis.

In the N-terminal section; belongs to the HesA/MoeB/ThiF family. UBA4 subfamily. It depends on Zn(2+) as a cofactor.

The protein localises to the cytoplasm. It localises to the cytosol. Its pathway is tRNA modification; 5-methoxycarbonylmethyl-2-thiouridine-tRNA biosynthesis. Functionally, plays a central role in 2-thiolation of mcm(5)S(2)U at tRNA wobble positions of cytosolic tRNA(Lys), tRNA(Glu) and tRNA(Gln). Acts by mediating the C-terminal thiocarboxylation of sulfur carrier URM1. Its N-terminus first activates URM1 as acyl-adenylate (-COAMP), then the persulfide sulfur on the catalytic cysteine is transferred to URM1 to form thiocarboxylation (-COSH) of its C-terminus. The reaction probably involves hydrogen sulfide that is generated from the persulfide intermediate and that acts as a nucleophile towards URM1. Subsequently, a transient disulfide bond is formed. Does not use thiosulfate as sulfur donor; NFS1 probably acting as a sulfur donor for thiocarboxylation reactions. Prior mcm(5) tRNA modification by the elongator complex is required for 2-thiolation. May also be involved in protein urmylation. The sequence is that of Adenylyltransferase and sulfurtransferase UBA4 from Candida glabrata (strain ATCC 2001 / BCRC 20586 / JCM 3761 / NBRC 0622 / NRRL Y-65 / CBS 138) (Yeast).